We begin with the raw amino-acid sequence, 221 residues long: PKHD-type hydroxylase A9601_13531 (221 aa).

The region spanning 80–174 (LIHGIMFTKS…RIVCVGWIES (95 aa)) is the Fe2OG dioxygenase domain. Residues H98, D100, and H155 each coordinate Fe cation. 2-oxoglutarate is bound at residue R165.

Fe(2+) is required as a cofactor. L-ascorbate serves as cofactor.

In Prochlorococcus marinus (strain AS9601), this protein is PKHD-type hydroxylase A9601_13531.